Consider the following 1162-residue polypeptide: Reticulon-4 (1162 aa).

The residue at position 1 (methionine 1) is an N-acetylmethionine. A disordered region spans residues methionine 1–isoleucine 183. Over methionine 1–glycine 988 the chain is Cytoplasmic. Phosphoserine occurs at positions 7 and 16. Low complexity predominate over residues serine 7 to serine 16. Positions glutamate 31–glutamate 54 are enriched in acidic residues. Residues proline 85 to alanine 99 show a composition bias toward pro residues. Serine 105 carries the post-translational modification Phosphoserine. The span at serine 109 to lysine 127 shows a compositional bias: low complexity. Residues serine 145, serine 165, serine 167, serine 329, and serine 344 each carry the phosphoserine modification. Phosphothreonine is present on threonine 348. Positions serine 408–asparagine 422 are enriched in basic and acidic residues. A disordered region spans residues serine 408–glutamate 432. Serine 426 is modified (phosphoserine). Residue threonine 430 is modified to Phosphothreonine. Phosphoserine is present on residues serine 489, serine 690, serine 727, serine 768, and serine 832. The disordered stretch occupies residues glutamate 711–serine 730. Acidic residues predominate over residues valine 713–serine 730. Threonine 834 carries the post-translational modification Phosphothreonine. Phosphoserine occurs at positions 857 and 961. The Reticulon domain maps to valine 975–glutamate 1162. A helical transmembrane segment spans residues valine 989 to valine 1009. The Lumenal segment spans residues threonine 1010–arginine 1078. At lysine 1074 the chain carries N6-acetyllysine. The helical transmembrane segment at leucine 1079–threonine 1099 threads the bilayer. At tyrosine 1100–glutamate 1162 the chain is on the cytoplasmic side.

As to quaternary structure, binds to RTN4R. Interacts with ATL1. Interacts with TMEM170A. Interacts with RTN4IP1. Interacts in trans with CNTNAP1. Interacts with REEP5. Interacts with GPR50. Interacts with synaptic plasticity regulator PANTS; the interaction results in enhanced RTN4-mediated inhibition of AMPA receptor clustering. In terms of assembly, homodimer. Interacts with BAD/Bcl-xl and BCL2. Interact with RTN3. Interacts with NGBR. Interacts with SPTLC1. Interacts with GRAMD4. Interacts with CDH5. Interacts with BACE1 and BACE2. Interacts with REEP5. Interacts with RETREG3. As to quaternary structure, interacts with BACE1 and BACE2. Interacts with TMEM33. Expressed in cardiomyocytes (at protein level). Highly expressed in brain but not deteceted in aorta, femoral and carotid arteries. Main isoform expressed in neurons. In terms of tissue distribution, expressed in cardiomyocytes (at protein level). Expressed in splenocytes, T-cells, B-cells, bone marrow derived dendritic cells and macrophages (at protein level). Expressed in neurons. Highly expressed in endothelial cells and vascular smooth muscle cells, including blood vessels and mesenteric arteries. Expressed in bronchial and alveolar epithelial cells as well as vascular endothelial cells of lungs. As to expression, expressed in B-cells, bone marrow dendritic cells and macrophages (at protein level). Expressed in cardiomyocytes. In terms of tissue distribution, expressed at very low levels in neurons.

Its subcellular location is the endoplasmic reticulum membrane. It is found in the cell membrane. It localises to the synapse. The protein resides in the cell junction. Required to induce the formation and stabilization of endoplasmic reticulum (ER) tubules. They regulate membrane morphogenesis in the ER by promoting tubular ER production. They influence nuclear envelope expansion, nuclear pore complex formation and proper localization of inner nuclear membrane proteins. However each isoform have specific functions mainly depending on their tissue expression specificities. Its function is as follows. Developmental neurite growth regulatory factor with a role as a negative regulator of axon-axon adhesion and growth, and as a facilitator of neurite branching. Regulates neurite fasciculation, branching and extension in the developing nervous system. Involved in down-regulation of growth, stabilization of wiring and restriction of plasticity in the adult CNS. Regulates the radial migration of cortical neurons via an RTN4R-LINGO1 containing receptor complex. Acts as a negative regulator of central nervous system angiogenesis. Inhibits spreading, migration and sprouting of primary brain microvascular endothelial cells (MVECs). Also induces the retraction of MVECs lamellipodia and filopodia in a ROCK pathway-dependent manner. Functionally, mainly function in endothelial cells and vascular smooth muscle cells, is also involved in immune system regulation. Modulator of vascular remodeling, promotes the migration of endothelial cells but inhibits the migration of vascular smooth muscle cells. Regulates endothelial sphingolipid biosynthesis with direct effects on vascular function and blood pressure. Inhibits serine palmitoyltransferase, SPTLC1, the rate-limiting enzyme of the novo sphingolipid biosynthetic pathway, thereby controlling production of endothelial sphingosine-1-phosphate (S1P). Required to promote macrophage homing and functions such as cytokine/chemokine gene expression involved in angiogenesis, arteriogenesis and tissue repair. Mediates ICAM1 induced transendothelial migration of leukocytes such as monocytes and neutrophils and acute inflammation. Necessary for immune responses triggered by nucleic acid sensing TLRs, such as TLR9, is required for proper TLR9 location to endolysosomes. Also involved in immune response to LPS. Plays a role in liver regeneration through the modulation of hepatocytes proliferation. Reduces the anti-apoptotic activity of Bcl-xl and Bcl-2. This is likely consecutive to their change in subcellular location, from the mitochondria to the endoplasmic reticulum, after binding and sequestration. With isoform C, inhibits BACE1 activity and amyloid precursor protein processing. In terms of biological role, regulates cardiomyocyte apoptosis upon hypoxic conditions. With isoform B, inhibits BACE1 activity and amyloid precursor protein processing. This chain is Reticulon-4, found in Mus musculus (Mouse).